Consider the following 216-residue polypeptide: 3-isopropylmalate dehydratase small subunit (216 aa).

Belongs to the LeuD family. LeuD type 1 subfamily. Heterodimer of LeuC and LeuD.

It catalyses the reaction (2R,3S)-3-isopropylmalate = (2S)-2-isopropylmalate. It functions in the pathway amino-acid biosynthesis; L-leucine biosynthesis; L-leucine from 3-methyl-2-oxobutanoate: step 2/4. Catalyzes the isomerization between 2-isopropylmalate and 3-isopropylmalate, via the formation of 2-isopropylmaleate. The sequence is that of 3-isopropylmalate dehydratase small subunit from Polaromonas sp. (strain JS666 / ATCC BAA-500).